We begin with the raw amino-acid sequence, 95 residues long: Protein TusB (95 aa).

The protein belongs to the DsrH/TusB family. Heterohexamer, formed by a dimer of trimers. The hexameric TusBCD complex contains 2 copies each of TusB, TusC and TusD. The TusBCD complex interacts with TusE.

The protein localises to the cytoplasm. Functionally, part of a sulfur-relay system required for 2-thiolation of 5-methylaminomethyl-2-thiouridine (mnm(5)s(2)U) at tRNA wobble positions. This is Protein TusB from Cronobacter sakazakii (strain ATCC BAA-894) (Enterobacter sakazakii).